Reading from the N-terminus, the 345-residue chain is Phosphate acyltransferase (345 aa).

Belongs to the PlsX family. As to quaternary structure, homodimer. Probably interacts with PlsY.

Its subcellular location is the cytoplasm. The catalysed reaction is a fatty acyl-[ACP] + phosphate = an acyl phosphate + holo-[ACP]. Its pathway is lipid metabolism; phospholipid metabolism. Its function is as follows. Catalyzes the reversible formation of acyl-phosphate (acyl-PO(4)) from acyl-[acyl-carrier-protein] (acyl-ACP). This enzyme utilizes acyl-ACP as fatty acyl donor, but not acyl-CoA. The polypeptide is Phosphate acyltransferase (Dichelobacter nodosus (strain VCS1703A)).